The chain runs to 163 residues: Extracellular giant hemoglobin major globin subunit B2 (163 aa).

The first 16 residues, 1–16 (MIALFVLMGLMAAASA), serve as a signal peptide directing secretion. The 145-residue stretch at 19–163 (CCSSEDRANV…RIANGISAGL (145 aa)) folds into the Globin domain. Cysteine 20 and cysteine 151 form a disulfide bridge. Hydrogen sulfide is bound at residue cysteine 83. Histidine 114 provides a ligand contact to heme b.

This sequence belongs to the globin family. As to quaternary structure, the 400 kDa hemoglobin consists of a spherical 24-mer arranged as a double layer of dome-shaped dodecamers. Each dodecamer is composed of the 3-fold trimer of the tetramer A1-A2-B1-B2 having one intra-tetramer (A1-B2) disulfide bond and one inter-tetramer (B1-B2) disulfide bond per tetramer.

It is found in the secreted. Its function is as follows. The extracellular giant hemoglobin is able to bind and transport oxygen and hydrosulfide simultaneously and reversibly at two different sites. In Oligobrachia mashikoi (Beard worm), this protein is Extracellular giant hemoglobin major globin subunit B2 (ghbB2).